Here is a 496-residue protein sequence, read N- to C-terminus: RNA-binding motif protein, Y chromosome, family 1 member D (496 aa).

An RRM domain is found at 8–85; the sequence is GKLFIGGLNR…KAIKVEQAKK (78 aa). Disordered stretches follow at residues 67–349 and 452–496; these read DMNG…HRDY and KDQR…SSRY. Composition is skewed to low complexity over residues 97–114 and 149–159; these read PASS…SARG and PVKRGPSSRSG. The segment covering 175–184 has biased composition (polar residues); it reads NSWMGSQGPM. 6 stretches are compositionally biased toward basic and acidic residues: residues 204-214, 242-253, 276-289, 313-326, 335-349, and 484-496; these read RNDRMSTRHDG, DNGHSNRDEHSS, AYRD…DESY, GYRD…HESY, SSRE…HRDY, and GESR…SSRY.

Interacts with splicing factor proteins SFRS3/SRP20, TRA2B/SFRS10, KHDRBS1/SAM68 and KHDRBS3. Testis-specific.

The protein resides in the nucleus. RNA-binding protein which may be involved in spermatogenesis. Required for sperm development, possibly by participating in pre-mRNA splicing in the testis. The sequence is that of RNA-binding motif protein, Y chromosome, family 1 member D (RBMY1D) from Homo sapiens (Human).